A 240-amino-acid chain; its full sequence is 4-hydroxy-tetrahydrodipicolinate reductase (240 aa).

Residues 79-81 and 103-106 contribute to the NAD(+) site; these read ATT and SANM. Histidine 135 acts as the Proton donor/acceptor in catalysis. Residue histidine 136 coordinates (S)-2,3,4,5-tetrahydrodipicolinate. Lysine 139 functions as the Proton donor in the catalytic mechanism. 145 to 146 serves as a coordination point for (S)-2,3,4,5-tetrahydrodipicolinate; the sequence is GT.

It belongs to the DapB family.

The protein localises to the cytoplasm. The enzyme catalyses (S)-2,3,4,5-tetrahydrodipicolinate + NAD(+) + H2O = (2S,4S)-4-hydroxy-2,3,4,5-tetrahydrodipicolinate + NADH + H(+). The catalysed reaction is (S)-2,3,4,5-tetrahydrodipicolinate + NADP(+) + H2O = (2S,4S)-4-hydroxy-2,3,4,5-tetrahydrodipicolinate + NADPH + H(+). It functions in the pathway amino-acid biosynthesis; L-lysine biosynthesis via DAP pathway; (S)-tetrahydrodipicolinate from L-aspartate: step 4/4. In terms of biological role, catalyzes the conversion of 4-hydroxy-tetrahydrodipicolinate (HTPA) to tetrahydrodipicolinate. This Staphylococcus aureus (strain bovine RF122 / ET3-1) protein is 4-hydroxy-tetrahydrodipicolinate reductase.